A 206-amino-acid polypeptide reads, in one-letter code: dTTP/UTP pyrophosphatase (206 aa).

Aspartate 87 serves as the catalytic Proton acceptor.

This sequence belongs to the Maf family. YhdE subfamily. It depends on a divalent metal cation as a cofactor.

The protein resides in the cytoplasm. It catalyses the reaction dTTP + H2O = dTMP + diphosphate + H(+). The catalysed reaction is UTP + H2O = UMP + diphosphate + H(+). Its function is as follows. Nucleoside triphosphate pyrophosphatase that hydrolyzes dTTP and UTP. May have a dual role in cell division arrest and in preventing the incorporation of modified nucleotides into cellular nucleic acids. The sequence is that of dTTP/UTP pyrophosphatase from Aromatoleum aromaticum (strain DSM 19018 / LMG 30748 / EbN1) (Azoarcus sp. (strain EbN1)).